Here is a 347-residue protein sequence, read N- to C-terminus: F-box protein At2g14500 (347 aa).

An F-box domain is found at 6-52 (PLTLSELPHDLLRNIFNRLSFADFHRATWNSISKQTAPPKTKSPWLI).

This is F-box protein At2g14500 from Arabidopsis thaliana (Mouse-ear cress).